A 201-amino-acid polypeptide reads, in one-letter code: Recombination protein RecR (201 aa).

Residues 57-72 (CRSCRTFTEEDECNIC) form a C4-type zinc finger. The 96-residue stretch at 81 to 176 (GQLCVVEMPE…KVTRIAHGIP (96 aa)) folds into the Toprim domain.

The protein belongs to the RecR family.

Its function is as follows. May play a role in DNA repair. It seems to be involved in an RecBC-independent recombinational process of DNA repair. It may act with RecF and RecO. The protein is Recombination protein RecR of Actinobacillus pleuropneumoniae serotype 5b (strain L20).